A 247-amino-acid chain; its full sequence is Elongation factor Ts (247 aa).

Residues 82–85 (TDFV) are involved in Mg(2+) ion dislocation from EF-Tu.

This sequence belongs to the EF-Ts family.

The protein localises to the cytoplasm. Functionally, associates with the EF-Tu.GDP complex and induces the exchange of GDP to GTP. It remains bound to the aminoacyl-tRNA.EF-Tu.GTP complex up to the GTP hydrolysis stage on the ribosome. The polypeptide is Elongation factor Ts (tsf) (Arthrospira platensis (Spirulina platensis)).